The following is a 188-amino-acid chain: ATP synthase subunit b 1 (188 aa).

A helical transmembrane segment spans residues 35–55; that stretch reads VHFGSHLFWLAISFGLFYLFI.

The protein belongs to the ATPase B chain family. F-type ATPases have 2 components, F(1) - the catalytic core - and F(0) - the membrane proton channel. F(1) has five subunits: alpha(3), beta(3), gamma(1), delta(1), epsilon(1). F(0) has three main subunits: a(1), b(2) and c(10-14). The alpha and beta chains form an alternating ring which encloses part of the gamma chain. F(1) is attached to F(0) by a central stalk formed by the gamma and epsilon chains, while a peripheral stalk is formed by the delta and b chains.

It localises to the cell inner membrane. In terms of biological role, f(1)F(0) ATP synthase produces ATP from ADP in the presence of a proton or sodium gradient. F-type ATPases consist of two structural domains, F(1) containing the extramembraneous catalytic core and F(0) containing the membrane proton channel, linked together by a central stalk and a peripheral stalk. During catalysis, ATP synthesis in the catalytic domain of F(1) is coupled via a rotary mechanism of the central stalk subunits to proton translocation. Component of the F(0) channel, it forms part of the peripheral stalk, linking F(1) to F(0). The protein is ATP synthase subunit b 1 of Bartonella henselae (strain ATCC 49882 / DSM 28221 / CCUG 30454 / Houston 1) (Rochalimaea henselae).